The primary structure comprises 62 residues: UPF0291 protein CLI_2672 (62 aa).

The protein belongs to the UPF0291 family.

It is found in the cytoplasm. The protein is UPF0291 protein CLI_2672 of Clostridium botulinum (strain Langeland / NCTC 10281 / Type F).